The chain runs to 1342 residues: WD repeat-containing protein 19 (1342 aa).

WD repeat units lie at residues 11-51 (TWLG…RSEI), 52-92 (NLPG…TSQL), 95-134 (GMRD…KIPV), 137-175 (KHTK…IRQT), 273-311 (NHKD…DMYV), and 317-356 (EENK…LGDA). 6 TPR repeats span residues 736 to 769 (AQDL…AKHL), 775 to 808 (PFIS…DNKE), 840 to 873 (RVLK…DKAA), 895 to 928 (PKIH…QSVI), 951 to 984 (LDGA…NEAF), and 1020 to 1053 (EKRY…EDNV).

In terms of assembly, component of the IFT complex A (IFT-A) complex. IFT-A complex is divided into a core subcomplex composed of IFT122:IFT140:WDR19 which is associated with TULP3 and a peripheral subcomplex composed of IFT43:WDR35:TTC21B. Interacts (via C-terminal region) with IFT122 (via C-terminal region). Interacts with BBS1. Interacts with TTC25. Some isoforms are tissue-specific. Highly expressed in the prostate. Lower expression in the cerebellum, pituitary gland, fetal lung, and pancreas. In normal prostate, expressed in both basal and luminal epithelial cells. No expression detected in fibromuscular stromal cells, endothelial cells, or infiltrating lymphocytes. Uniformed expression in prostate adenocarcinoma cells.

The protein localises to the cell projection. It localises to the cilium. The protein resides in the cytoplasm. It is found in the cytoskeleton. Its subcellular location is the cilium basal body. The protein localises to the photoreceptor outer segment. It localises to the flagellum. Functionally, as component of the IFT complex A (IFT-A), a complex required for retrograde ciliary transport and entry into cilia of G protein-coupled receptors (GPCRs), it is involved in cilia function and/or assembly. Essential for functional IFT-A assembly and ciliary entry of GPCRs. Associates with the BBSome complex to mediate ciliary transport. The chain is WD repeat-containing protein 19 from Homo sapiens (Human).